The chain runs to 175 residues: Large ribosomal subunit protein uL10 (175 aa).

Belongs to the universal ribosomal protein uL10 family. In terms of assembly, part of the ribosomal stalk of the 50S ribosomal subunit. The N-terminus interacts with L11 and the large rRNA to form the base of the stalk. The C-terminus forms an elongated spine to which L12 dimers bind in a sequential fashion forming a multimeric L10(L12)X complex.

Its function is as follows. Forms part of the ribosomal stalk, playing a central role in the interaction of the ribosome with GTP-bound translation factors. The sequence is that of Large ribosomal subunit protein uL10 from Prochlorococcus marinus (strain MIT 9515).